The sequence spans 122 residues: uncharacterized protein (122 aa).

A compositionally biased stretch (basic and acidic residues) spans 1 to 15 (MAEPGGRGDYRKDGR). A disordered region spans residues 1-49 (MAEPGGRGDYRKDGRLPSLSRSPLSTTLGTSPACGLEIPPTSGARPDGS). Positions 16 to 32 (LPSLSRSPLSTTLGTSP) are enriched in low complexity.

This is an uncharacterized protein from Homo sapiens (Human).